Here is a 212-residue protein sequence, read N- to C-terminus: Protein Rv0786c (212 aa).

This Mycobacterium tuberculosis (strain ATCC 25618 / H37Rv) protein is Protein Rv0786c.